The primary structure comprises 506 residues: Maturase K (506 aa).

This sequence belongs to the intron maturase 2 family. MatK subfamily.

Its subcellular location is the plastid. The protein localises to the chloroplast. Usually encoded in the trnK tRNA gene intron. Probably assists in splicing its own and other chloroplast group II introns. In Ocimum basilicum (Sweet basil), this protein is Maturase K.